Here is a 204-residue protein sequence, read N- to C-terminus: Peptidyl-tRNA hydrolase (204 aa).

Tyr-14 contributes to the tRNA binding site. The active-site Proton acceptor is the His-19. Residues Phe-64, Asn-66, and Asn-112 each contribute to the tRNA site.

The protein belongs to the PTH family. As to quaternary structure, monomer.

Its subcellular location is the cytoplasm. It carries out the reaction an N-acyl-L-alpha-aminoacyl-tRNA + H2O = an N-acyl-L-amino acid + a tRNA + H(+). Its function is as follows. Hydrolyzes ribosome-free peptidyl-tRNAs (with 1 or more amino acids incorporated), which drop off the ribosome during protein synthesis, or as a result of ribosome stalling. In terms of biological role, catalyzes the release of premature peptidyl moieties from peptidyl-tRNA molecules trapped in stalled 50S ribosomal subunits, and thus maintains levels of free tRNAs and 50S ribosomes. This chain is Peptidyl-tRNA hydrolase, found in Azorhizobium caulinodans (strain ATCC 43989 / DSM 5975 / JCM 20966 / LMG 6465 / NBRC 14845 / NCIMB 13405 / ORS 571).